Here is a 199-residue protein sequence, read N- to C-terminus: Glycerol-3-phosphate acyltransferase (199 aa).

Helical transmembrane passes span 5–25, 56–76, 83–103, 118–138, and 141–161; these read VLTI…SAVL, SAAL…YLAF, IALG…IFFG, APIG…LVLV, and YSSF…WWLD.

It belongs to the PlsY family. As to quaternary structure, probably interacts with PlsX.

It localises to the cell inner membrane. The catalysed reaction is an acyl phosphate + sn-glycerol 3-phosphate = a 1-acyl-sn-glycero-3-phosphate + phosphate. Its pathway is lipid metabolism; phospholipid metabolism. In terms of biological role, catalyzes the transfer of an acyl group from acyl-phosphate (acyl-PO(4)) to glycerol-3-phosphate (G3P) to form lysophosphatidic acid (LPA). This enzyme utilizes acyl-phosphate as fatty acyl donor, but not acyl-CoA or acyl-ACP. The polypeptide is Glycerol-3-phosphate acyltransferase (Shewanella halifaxensis (strain HAW-EB4)).